Reading from the N-terminus, the 118-residue chain is MARIAGINIPDQKHTVIALTGIFGIGRTRARAICATTSIAEDAKIKELSEAQIDTLREAVAEYTVEGDLRREVSMNIKRLMDLGCYRGIRHRRSLPLRGQRTKTNARTRKGPRKPIRK.

The segment at 94 to 118 (SLPLRGQRTKTNARTRKGPRKPIRK) is disordered.

This sequence belongs to the universal ribosomal protein uS13 family. Part of the 30S ribosomal subunit. Forms a loose heterodimer with protein S19. Forms two bridges to the 50S subunit in the 70S ribosome.

Located at the top of the head of the 30S subunit, it contacts several helices of the 16S rRNA. In the 70S ribosome it contacts the 23S rRNA (bridge B1a) and protein L5 of the 50S subunit (bridge B1b), connecting the 2 subunits; these bridges are implicated in subunit movement. Contacts the tRNAs in the A and P-sites. This is Small ribosomal subunit protein uS13 from Shewanella sediminis (strain HAW-EB3).